The sequence spans 103 residues: Large ribosomal subunit protein bL21 (103 aa).

It belongs to the bacterial ribosomal protein bL21 family. In terms of assembly, part of the 50S ribosomal subunit. Contacts protein L20.

In terms of biological role, this protein binds to 23S rRNA in the presence of protein L20. The sequence is that of Large ribosomal subunit protein bL21 from Shewanella loihica (strain ATCC BAA-1088 / PV-4).